Reading from the N-terminus, the 464-residue chain is Siroheme synthase (464 aa).

A precorrin-2 dehydrogenase /sirohydrochlorin ferrochelatase region spans residues 1-203 (MKYLPLFHNL…GQGAEAERLL (203 aa)). Residues 22–23 (EI) and 43–44 (PE) contribute to the NAD(+) site. S128 bears the Phosphoserine mark. A uroporphyrinogen-III C-methyltransferase region spans residues 216 to 464 (GEVYLVGAGP…AWFEGAQGQI (249 aa)). P225 provides a ligand contact to S-adenosyl-L-methionine. The active-site Proton acceptor is the D248. K270 functions as the Proton donor in the catalytic mechanism. Residues 301–303 (GGD), I306, 331–332 (TA), M383, and G412 contribute to the S-adenosyl-L-methionine site.

It in the N-terminal section; belongs to the precorrin-2 dehydrogenase / sirohydrochlorin ferrochelatase family. This sequence in the C-terminal section; belongs to the precorrin methyltransferase family.

The enzyme catalyses uroporphyrinogen III + 2 S-adenosyl-L-methionine = precorrin-2 + 2 S-adenosyl-L-homocysteine + H(+). The catalysed reaction is precorrin-2 + NAD(+) = sirohydrochlorin + NADH + 2 H(+). It catalyses the reaction siroheme + 2 H(+) = sirohydrochlorin + Fe(2+). Its pathway is cofactor biosynthesis; adenosylcobalamin biosynthesis; precorrin-2 from uroporphyrinogen III: step 1/1. The protein operates within cofactor biosynthesis; adenosylcobalamin biosynthesis; sirohydrochlorin from precorrin-2: step 1/1. It participates in porphyrin-containing compound metabolism; siroheme biosynthesis; precorrin-2 from uroporphyrinogen III: step 1/1. It functions in the pathway porphyrin-containing compound metabolism; siroheme biosynthesis; siroheme from sirohydrochlorin: step 1/1. Its pathway is porphyrin-containing compound metabolism; siroheme biosynthesis; sirohydrochlorin from precorrin-2: step 1/1. Multifunctional enzyme that catalyzes the SAM-dependent methylations of uroporphyrinogen III at position C-2 and C-7 to form precorrin-2 via precorrin-1. Then it catalyzes the NAD-dependent ring dehydrogenation of precorrin-2 to yield sirohydrochlorin. Finally, it catalyzes the ferrochelation of sirohydrochlorin to yield siroheme. This is Siroheme synthase from Pseudomonas fluorescens (strain Pf0-1).